A 221-amino-acid polypeptide reads, in one-letter code: Succinate--CoA ligase [ADP-forming] subunit beta, mitochondrial (221 aa).

The ATP-grasp domain occupies 1 to 122 (DVVIKAQVLA…DSNSAYRQKI (122 aa)). Residue K5 coordinates ATP. 2 positions are modified to N6-acetyllysine: K22 and K26. S114 carries the phosphoserine modification. At T139 the chain carries Phosphothreonine. Position 171–173 (171–173 (GIM)) interacts with substrate. The residue at position 196 (K196) is an N6-acetyllysine.

It belongs to the succinate/malate CoA ligase beta subunit family. ATP-specific subunit beta subfamily. As to quaternary structure, heterodimer of an alpha and a beta subunit. The beta subunit determines specificity for ATP. Interacts with ALAS2.

It is found in the mitochondrion. It catalyses the reaction succinate + ATP + CoA = succinyl-CoA + ADP + phosphate. It participates in carbohydrate metabolism; tricarboxylic acid cycle; succinate from succinyl-CoA (ligase route): step 1/1. Its function is as follows. ATP-specific succinyl-CoA synthetase functions in the citric acid cycle (TCA), coupling the hydrolysis of succinyl-CoA to the synthesis of ATP and thus represents the only step of substrate-level phosphorylation in the TCA. The beta subunit provides nucleotide specificity of the enzyme and binds the substrate succinate, while the binding sites for coenzyme A and phosphate are found in the alpha subunit. This is Succinate--CoA ligase [ADP-forming] subunit beta, mitochondrial from Mesocricetus auratus (Golden hamster).